The chain runs to 265 residues: MDICICYFFTILTTISCWNVTSYSKNSDFQYLSSKNFLDQLQIASNKTVIDIGCGNGKITNYISSLVKDGSVIGIDKDSSMIKYAKETYPNVDFKVMDIQNENIDKKYDIVVSFFCLPWIVNKQASFHHISNMMKSGSKLYILAAIMETNHVTLINNLMKKDHWKLFFVNYSSPFDYLNDIQYDIYANQSGIEQKKFKVYNIPYTFKDRQSLHKFNLAILPQLNQLSIEHREIFITELLNDYFSFIGSVNLTINFTIVKFIGCRV.

Residues 1–17 (MDICICYFFTILTTISC) form the signal peptide.

Belongs to the methyltransferase superfamily.

This Acheta domesticus (House cricket) protein is Putative methyltransferase 235L.